The following is a 52-amino-acid chain: Large ribosomal subunit protein bL33 (52 aa).

It belongs to the bacterial ribosomal protein bL33 family.

The chain is Large ribosomal subunit protein bL33 (rpmG) from Chlamydia muridarum (strain MoPn / Nigg).